Reading from the N-terminus, the 291-residue chain is MSTKIDGKQIAAEIKTNLAERVNRLKAQGIQPGLGTLLVGEDPGSMKYVAGKHADCQEVGITSVKKELPADASFDDIAATVRELNEDPACTGFIVQLPLPKGINENAIIDMIDPAKDADGMHPYNLGELVLHVRGDISTPLPCTPRGVLELLDAYDIDLNGKEVCVLGRGITIGRTIGLMLTRNAVNATVTLCHTGTRDVADHMRRADVIVAAMGSAGFVTPDKIKDGAVLVDVGISRVYDEEAGRYRIKGDVDKACYDKASAYTPNPGGVGPMTRAMLLANVVEMAERHA.

NADP(+) is bound by residues glycine 168 to glycine 170, threonine 195, and isoleucine 236.

The protein belongs to the tetrahydrofolate dehydrogenase/cyclohydrolase family. Homodimer.

It carries out the reaction (6R)-5,10-methylene-5,6,7,8-tetrahydrofolate + NADP(+) = (6R)-5,10-methenyltetrahydrofolate + NADPH. It catalyses the reaction (6R)-5,10-methenyltetrahydrofolate + H2O = (6R)-10-formyltetrahydrofolate + H(+). It participates in one-carbon metabolism; tetrahydrofolate interconversion. Functionally, catalyzes the oxidation of 5,10-methylenetetrahydrofolate to 5,10-methenyltetrahydrofolate and then the hydrolysis of 5,10-methenyltetrahydrofolate to 10-formyltetrahydrofolate. The protein is Bifunctional protein FolD of Bifidobacterium longum subsp. infantis (strain ATCC 15697 / DSM 20088 / JCM 1222 / NCTC 11817 / S12).